The sequence spans 160 residues: uncharacterized protein (160 aa).

It is found in the plastid. This is an uncharacterized protein from Euglena longa (Euglenophycean alga).